We begin with the raw amino-acid sequence, 775 residues long: N6-adenosine-methyltransferase non-catalytic subunit MTB (775 aa).

Residues 1–10 (MKKKQEESSL) are compositionally biased toward basic and acidic residues. Disordered regions lie at residues 1-424 (MKKK…GAIP) and 520-569 (DRGG…EQND). A compositionally biased stretch (low complexity) spans 40–49 (FESSSRSGGS). Composition is skewed to basic and acidic residues over residues 50–79 (KSKE…ERTH), 100–117 (DGDH…DSGG), 125–222 (EHGE…LKDN), 229–278 (SSGD…RGEA), and 333–344 (EWAHNQEGRQRS). Residues 375–400 (QRGSTPGRTNFVQTPNRGYQTPQGTR) are compositionally biased toward polar residues.

The protein belongs to the MT-A70-like family. Forms homodimers. Interacts with HAKAI, MTA and VIR. Associates with MTA, FIP37, VIR and HAKAI to form the m6A writer complex which is essential for adenosine methylation at specific mRNA sequences.

The protein resides in the nucleus speckle. Its subcellular location is the nucleus. It localises to the nucleoplasm. In terms of biological role, probable non-catalytic subunit of the N6-methyltransferase complex, a multiprotein complex that mediates N6-methyladenosine (m6A) methylation at the 5'-[AG]GAC-3' consensus sites of some mRNAs. Associates with MTA, FIP37, VIR and HAKAI to form the m6A writer complex which is essential for adenosine methylation at specific mRNA sequences. N6-methyladenosine (m6A) plays a role in mRNA stability, processing, translation efficiency and editing. This chain is N6-adenosine-methyltransferase non-catalytic subunit MTB, found in Arabidopsis thaliana (Mouse-ear cress).